We begin with the raw amino-acid sequence, 595 residues long: Aspartate--tRNA(Asp/Asn) ligase (595 aa).

E177 contacts L-aspartate. The aspartate stretch occupies residues 201-204 (QQFK). Residue R223 participates in L-aspartate binding. ATP contacts are provided by residues 223–225 (RDE) and Q232. Position 455 (H455) interacts with L-aspartate. Residue E489 coordinates ATP. R496 provides a ligand contact to L-aspartate. Residue 542–545 (GLDR) participates in ATP binding.

This sequence belongs to the class-II aminoacyl-tRNA synthetase family. Type 1 subfamily. As to quaternary structure, homodimer.

Its subcellular location is the cytoplasm. The enzyme catalyses tRNA(Asx) + L-aspartate + ATP = L-aspartyl-tRNA(Asx) + AMP + diphosphate. Functionally, aspartyl-tRNA synthetase with relaxed tRNA specificity since it is able to aspartylate not only its cognate tRNA(Asp) but also tRNA(Asn). Reaction proceeds in two steps: L-aspartate is first activated by ATP to form Asp-AMP and then transferred to the acceptor end of tRNA(Asp/Asn). The protein is Aspartate--tRNA(Asp/Asn) ligase of Opitutus terrae (strain DSM 11246 / JCM 15787 / PB90-1).